A 311-amino-acid polypeptide reads, in one-letter code: Ribonuclease HIII (311 aa).

Positions 95-311 (MSIVGSDEVG…NTEKAFRLLK (217 aa)) constitute an RNase H type-2 domain. Positions 101, 102, and 206 each coordinate a divalent metal cation.

This sequence belongs to the RNase HII family. RnhC subfamily. It depends on Mn(2+) as a cofactor. The cofactor is Mg(2+).

Its subcellular location is the cytoplasm. It carries out the reaction Endonucleolytic cleavage to 5'-phosphomonoester.. Functionally, endonuclease that specifically degrades the RNA of RNA-DNA hybrids. In Bacillus thuringiensis subsp. konkukian (strain 97-27), this protein is Ribonuclease HIII.